An 872-amino-acid chain; its full sequence is DNA mismatch repair protein MutS (872 aa).

ATP is bound at residue 623–630 (GPNMAGKS).

The protein belongs to the DNA mismatch repair MutS family.

In terms of biological role, this protein is involved in the repair of mismatches in DNA. It is possible that it carries out the mismatch recognition step. This protein has a weak ATPase activity. The chain is DNA mismatch repair protein MutS from Trichlorobacter lovleyi (strain ATCC BAA-1151 / DSM 17278 / SZ) (Geobacter lovleyi).